We begin with the raw amino-acid sequence, 193 residues long: dTTP/UTP pyrophosphatase (193 aa).

The active-site Proton acceptor is the D75.

Belongs to the Maf family. YhdE subfamily. A divalent metal cation is required as a cofactor.

It localises to the cytoplasm. The catalysed reaction is dTTP + H2O = dTMP + diphosphate + H(+). It carries out the reaction UTP + H2O = UMP + diphosphate + H(+). Functionally, nucleoside triphosphate pyrophosphatase that hydrolyzes dTTP and UTP. May have a dual role in cell division arrest and in preventing the incorporation of modified nucleotides into cellular nucleic acids. The polypeptide is dTTP/UTP pyrophosphatase (Chlorobium phaeovibrioides (strain DSM 265 / 1930) (Prosthecochloris vibrioformis (strain DSM 265))).